The primary structure comprises 171 residues: Putative phosphoesterase BPUM_1117 (171 aa).

The active-site Proton donor is the histidine 34. 2 short sequence motifs (HXTX) span residues 34 to 37 (HLTL) and 115 to 118 (HVTV). The Proton acceptor role is filled by histidine 115.

Belongs to the 2H phosphoesterase superfamily. YjcG family.

The protein is Putative phosphoesterase BPUM_1117 of Bacillus pumilus (strain SAFR-032).